Reading from the N-terminus, the 546-residue chain is MEDPESLGFEHMGLDHRLLQAVTDLGWSRPTLIQEKAIPLALEGKDLLARARTGSGKTAAYAIPMLQLLLHRKATGPVVEQAVRALVLVPTKELARQAQSMIQQLAAYCARDIRVANVSAAEDSASQRAVLMEKPDVVVGTPSRILNHLQQDNLKLRDSMELLVVDEADLLFSFGFEEELKSLLCHLPRIYQAFLMSATFNEDVQALKELVLHNPVTLKLQESQLPGPDQLQQFQVVCETEEDKFLLLYALLKLSLIRGKSLLFVNTLERSYRLRLFLEQFSIPACVLNGELPLRSRCHIISQFNQGFYDCVIATDAEVLGPPVKGKHRGKGPKRDKASDPEAGVARGIDFHHVCAVLNFDLPPTPEAYIHRAGRTARANNPGIVLTFVLPTEQSQLGKIEELLSGDSGAPVLLPYQFHMEEIEGFRYRCRDAMRSVTKQAIREARLKEIKEELLHSEKLKTYFEDNPRDLQLLRHDLPLHPAVVKPHLGNVPDYLVPPALRGLVHPHKKRKKPLASKKAKKAKTQNPLRSFKHRGEKCRPTAAPS.

Positions 7-35 (LGFEHMGLDHRLLQAVTDLGWSRPTLIQE) match the Q motif motif. One can recognise a Helicase ATP-binding domain in the interval 38-218 (IPLALEGKDL…ELVLHNPVTL (181 aa)). Residue 51–58 (ARTGSGKT) coordinates ATP. Phosphoserine is present on Ser126. Thr141 carries the phosphothreonine modification. Positions 166 to 169 (DEAD) match the DEAD box motif. The Helicase C-terminal domain maps to 230–424 (QLQQFQVVCE…PYQFHMEEIE (195 aa)). 2 disordered regions span residues 323 to 342 (PVKG…SDPE) and 504 to 546 (LVHP…AAPS). A compositionally biased stretch (basic residues) spans 505-524 (VHPHKKRKKPLASKKAKKAK). Ser531 carries the post-translational modification Phosphoserine.

It belongs to the DEAD box helicase family. DDX56/DBP9 subfamily. In terms of assembly, may form homooligomeric complexes. Interacts with IRF3. Interacts with OCT4 and POU5F1.

It localises to the nucleus. The protein localises to the nucleolus. It carries out the reaction ATP + H2O = ADP + phosphate + H(+). Its function is as follows. Nucleolar RNA helicase that plays a role in various biological processes including innate immunity, ribosome biogenesis or nucleolus organization. Plays an essential role in maintaining nucleolar integrity in planarian stem cells. Maintains embryonic stem cells proliferation by conventional regulation of ribosome assembly and interaction with OCT4 and POU5F1 complex. Regulates antiviral innate immunity by inhibiting the virus-triggered signaling nuclear translocation of IRF3. Mechanistically, acts by disrupting the interaction between IRF3 and importin IPO5. May play a role in later stages of the processing of the pre-ribosomal particles leading to mature 60S ribosomal subunits. Has intrinsic ATPase activity. The polypeptide is Probable ATP-dependent RNA helicase DDX56 (DDX56) (Bos taurus (Bovine)).